We begin with the raw amino-acid sequence, 90 residues long: Probable Fe(2+)-trafficking protein (90 aa).

It belongs to the Fe(2+)-trafficking protein family.

Could be a mediator in iron transactions between iron acquisition and iron-requiring processes, such as synthesis and/or repair of Fe-S clusters in biosynthetic enzymes. The protein is Probable Fe(2+)-trafficking protein of Aeromonas hydrophila subsp. hydrophila (strain ATCC 7966 / DSM 30187 / BCRC 13018 / CCUG 14551 / JCM 1027 / KCTC 2358 / NCIMB 9240 / NCTC 8049).